Here is a 253-residue protein sequence, read N- to C-terminus: Indole-3-glycerol phosphate synthase (253 aa).

This sequence belongs to the TrpC family.

The enzyme catalyses 1-(2-carboxyphenylamino)-1-deoxy-D-ribulose 5-phosphate + H(+) = (1S,2R)-1-C-(indol-3-yl)glycerol 3-phosphate + CO2 + H2O. Its pathway is amino-acid biosynthesis; L-tryptophan biosynthesis; L-tryptophan from chorismate: step 4/5. This is Indole-3-glycerol phosphate synthase from Bacillus cereus (strain ATCC 14579 / DSM 31 / CCUG 7414 / JCM 2152 / NBRC 15305 / NCIMB 9373 / NCTC 2599 / NRRL B-3711).